Reading from the N-terminus, the 245-residue chain is Thiopurine S-methyltransferase (245 aa).

Residue 29–40 participates in S-adenosyl-L-methionine binding; that stretch reads WREKWVDGKIGF. Residue phenylalanine 40 participates in substrate binding. An N6-acetyllysine modification is found at lysine 58. S-adenosyl-L-methionine contacts are provided by leucine 69, glutamate 90, and arginine 152.

The protein belongs to the class I-like SAM-binding methyltransferase superfamily. TPMT family. In terms of assembly, monomer.

The protein localises to the cytoplasm. It carries out the reaction S-adenosyl-L-methionine + a thiopurine = S-adenosyl-L-homocysteine + a thiopurine S-methylether.. This Felis catus (Cat) protein is Thiopurine S-methyltransferase (TPMT).